The following is a 383-amino-acid chain: Dynein axonemal assembly factor 11 (383 aa).

LRR repeat units follow at residues 20–45, 46–66, 67–89, and 90–110; these read LSNLKEVALHQQDIERIELIGDACRE, LEILYLCNNYISRIEGLQHLK, YLKYLNLAVNNITYIEGLEGCEA, and LERLDLTLNFVADVTCVERLR. The LRRCT domain occupies 128-146; that stretch reads VAGYRAYVVHALPQLRELD. Positions 201 to 244 are disordered; it reads KGERLYGHTPEERLQMLREKEEEERRKREEQRERERSSQFGAIR. The stretch at 211-239 forms a coiled coil; sequence EERLQMLREKEEEERRKREEQRERERSSQ.

This sequence belongs to the tilB family.

The protein localises to the cytoplasm. It localises to the cytoskeleton. Its subcellular location is the flagellum basal body. Its function is as follows. Involved in the regulation of the cell cycle; is required for the basal body replication and new flagellum biogenesis. In Trypanosoma brucei brucei, this protein is Dynein axonemal assembly factor 11 (dnaaf11).